We begin with the raw amino-acid sequence, 217 residues long: Somatotropin (217 aa).

Positions 1-27 (MATGSHTATLLLAVALLGLPWPQEAGA) are cleaved as a signal peptide. Zn(2+) is bound at residue histidine 46. Cysteine 79 and cysteine 190 are disulfide-bonded. Serine 132 carries the post-translational modification Phosphoserine. Glutamate 199 is a Zn(2+) binding site. Cysteine 207 and cysteine 215 are disulfide-bonded.

It belongs to the somatotropin/prolactin family.

The protein resides in the secreted. Plays an important role in growth control. Its major role in stimulating body growth is to stimulate the liver and other tissues to secrete IGF1. It stimulates both the differentiation and proliferation of myoblasts. It also stimulates amino acid uptake and protein synthesis in muscle and other tissues. In Xanthonycticebus pygmaeus (Pygmy slow loris), this protein is Somatotropin (GH1).